Here is a 227-residue protein sequence, read N- to C-terminus: Isoprenyl transferase (227 aa).

Asp-13 is a catalytic residue. Asp-13 contributes to the Mg(2+) binding site. Residues 14 to 17 (GNGR), Trp-18, Arg-26, His-30, and 58 to 60 (STE) contribute to the substrate site. The Proton acceptor role is filled by Asn-61. Residues Trp-62, Arg-64, Arg-175, and 181–183 (RLS) contribute to the substrate site. Glu-194 contacts Mg(2+).

This sequence belongs to the UPP synthase family. Homodimer. Mg(2+) is required as a cofactor.

Catalyzes the condensation of isopentenyl diphosphate (IPP) with allylic pyrophosphates generating different type of terpenoids. In Treponema denticola (strain ATCC 35405 / DSM 14222 / CIP 103919 / JCM 8153 / KCTC 15104), this protein is Isoprenyl transferase.